A 1116-amino-acid chain; its full sequence is Protein STICHEL-like 1 (1116 aa).

Disordered stretches follow at residues Arg95–Thr138 and Lys225–Pro244. Acidic residues predominate over residues Asn115–Val124. Short sequence motifs (PEST) lie at residues Arg257–Arg282 and Lys402–Gln422. ATP is bound at residue Gly463–Thr470. The Zn(2+) site is built by Cys482, Cys492, Cys495, and Cys498. Residues Glu726 to Thr760 are a coiled coil. The interval Pro777–Ser798 is disordered. A compositionally biased stretch (polar residues) spans Ser778–Arg793.

Belongs to the DnaX/STICHEL family.

The polypeptide is Protein STICHEL-like 1 (Arabidopsis thaliana (Mouse-ear cress)).